Consider the following 900-residue polypeptide: Nitrate reductase [NADH] (900 aa).

C172 serves as a coordination point for Mo-molybdopterin. The 76-residue stretch at 521–596 folds into the Cytochrome b5 heme-binding domain; the sequence is TKMYSLSEVK…LEDYRVGELI (76 aa). 2 residues coordinate heme: H556 and H579. Residues 644 to 756 form the FAD-binding FR-type domain; the sequence is REKIPCKLIS…KGPLGHIEYT (113 aa). FAD is bound by residues 696–699, 713–717, F718, F725, 730–732, and T783; these read RAYT, VVKVY, and AMS.

Belongs to the nitrate reductase family. Homodimer. The cofactor is FAD. Requires heme as cofactor. Mo-molybdopterin is required as a cofactor.

The enzyme catalyses nitrite + NAD(+) + H2O = nitrate + NADH + H(+). Its function is as follows. Nitrate reductase is a key enzyme involved in the first step of nitrate assimilation in plants, fungi and bacteria. The protein is Nitrate reductase [NADH] (NIA) of Lotus japonicus (Lotus corniculatus var. japonicus).